A 190-amino-acid chain; its full sequence is Xanthine phosphoribosyltransferase (190 aa).

The xanthine site is built by Leu-20 and Asn-27. 128-132 (ANGKA) serves as a coordination point for 5-phospho-alpha-D-ribose 1-diphosphate. Lys-156 contributes to the xanthine binding site.

Belongs to the purine/pyrimidine phosphoribosyltransferase family. Xpt subfamily. As to quaternary structure, homodimer.

It is found in the cytoplasm. It catalyses the reaction XMP + diphosphate = xanthine + 5-phospho-alpha-D-ribose 1-diphosphate. The protein operates within purine metabolism; XMP biosynthesis via salvage pathway; XMP from xanthine: step 1/1. Functionally, converts the preformed base xanthine, a product of nucleic acid breakdown, to xanthosine 5'-monophosphate (XMP), so it can be reused for RNA or DNA synthesis. In Ruminiclostridium cellulolyticum (strain ATCC 35319 / DSM 5812 / JCM 6584 / H10) (Clostridium cellulolyticum), this protein is Xanthine phosphoribosyltransferase.